The primary structure comprises 140 residues: Nucleoside diphosphate kinase (140 aa).

Residues K9, F57, R85, T91, R102, and N112 each coordinate ATP. H115 functions as the Pros-phosphohistidine intermediate in the catalytic mechanism.

Belongs to the NDK family. Homotetramer. It depends on Mg(2+) as a cofactor.

The protein localises to the cytoplasm. It catalyses the reaction a 2'-deoxyribonucleoside 5'-diphosphate + ATP = a 2'-deoxyribonucleoside 5'-triphosphate + ADP. The enzyme catalyses a ribonucleoside 5'-diphosphate + ATP = a ribonucleoside 5'-triphosphate + ADP. Functionally, major role in the synthesis of nucleoside triphosphates other than ATP. The ATP gamma phosphate is transferred to the NDP beta phosphate via a ping-pong mechanism, using a phosphorylated active-site intermediate. The polypeptide is Nucleoside diphosphate kinase (Chlorobaculum tepidum (strain ATCC 49652 / DSM 12025 / NBRC 103806 / TLS) (Chlorobium tepidum)).